We begin with the raw amino-acid sequence, 326 residues long: Methyltransferase phqN (326 aa).

It belongs to the class I-like SAM-binding methyltransferase superfamily. Erg6/SMT family.

Its pathway is alkaloid biosynthesis. Its function is as follows. Methyltransferase; part of the gene cluster that mediates the biosynthesis of paraherquamide, a fungal indole alkaloid that belongs to a family of natural products containing a characteristic bicyclo[2.2.2]diazaoctane core. The first steps in the biosynthesis of paraherquamide is the production of the beta-methyl-proline precursor from L-isoleucine. They require oxidation of a terminally hydroxylated L-isoleucine to the corresponding aldehyde by enzymes which have still to be identified. Spontaneous cyclization and dehydration would yield the 4-methyl pyrolline-5-carboxylic acid, which is then reduced by the pyrroline-5-carboxylate reductase phqD leading to the beta-methyl-proline precursor. The next step of paraherquamide biosynthesis involves coupling of beta-methyl-proline and L-tryptophan by the bimodular NRPS phqB, to produce a monooxopiperazine intermediate. The reductase (R) domain of phqB utilizes NADPH for hydride transfer to reduce the thioester bond of the T domain-tethered linear dipeptide to a hemithioaminal intermediate, which spontaneously cleaves the C-S bond to release the aldehyde product. This compound undergoes spontaneous cyclization and dehydration to give a dienamine which is reverse prenylated at C-2 by the reverse prenyltransferase phqJ. The other prenyltransferase present in the cluster, phqI may be a redundant gene in the pathway. During biosynthetic assembly, the key step to produce the polycyclic core is catalyzed by the bifunctional reductase and intramolecular [4+2] Diels-Alderase, phqE, resulting in formation of the [2.2.2] diazaoctane intermediate preparaherquamide. Following formation of preparaherquamide, an indole 2,3-epoxidation-initiated pinacol-like rearrangement is catalyzed by the phqK FAD-dependent monooxygenase. The prenyltransferase phqA, the cytochrome P450 monooxygenase phqL, and the FAD-linked oxidoreductase phqH (or the cytochrome P450 monooxygenase phqM), are proposed to be involved in the formation of the pyran ring. The FAD-dependent monooxygenase phqK is likely responsible for generation of the spiro-oxindole, and the N-methylation is likely mediated by the phqN methyltransferase leading to the isolable natural product paraherquamide F. However, the order of these biosynthetic steps has still to be determined. In late-stage paraherquamide biosynthesis, the third P450 monooxygenase, phqO, is probably responsible for the C-14 hydroxylation, transforming paraherquamide F to paraherquamide G, and paraherquamide E to the final product paraherquamide A. The expansion from the 6-membered ring pyran (in paraherquamides F and G) to the 7-membered dioxepin ring (in paraherquamides A and E) represents a poorly understood but intriguing process that probably involves the 2-oxoglutarate-dependent dioxygenase phqC. Finally, the remaining members of the paraherquamide cluster, including phqI as well as phqM (or phqH), do not have a clearly prescribed role and appear to be redundant. The polypeptide is Methyltransferase phqN (Penicillium fellutanum).